The chain runs to 256 residues: Inner membrane transport permease YadH (256 aa).

Residues 1 to 22 lie on the Periplasmic side of the membrane; that stretch reads MMHLYWVALKSIWAKEIHRFMR. Positions 22 to 251 constitute an ABC transmembrane type-2 domain; sequence RIWVQTLVPP…LICWSLIQRG (230 aa). A helical transmembrane segment spans residues 23–43; it reads IWVQTLVPPVITMTLYFIIFG. The Cytoplasmic segment spans residues 44–52; it reads NLIGSRIGD. A helical membrane pass occupies residues 53 to 73; it reads MHGFSYMQFIVPGLIMMSVIT. Over 74–94 the chain is Periplasmic; sequence NAYANVASSFFGAKFQRNIEE. A helical transmembrane segment spans residues 95 to 115; it reads LLVAPVPTHVIIAGYVGGGVA. Arg-116 is a topological domain (cytoplasmic). A helical membrane pass occupies residues 117-137; that stretch reads GLFVGILVTAISLFFVPFQVH. Residue Ser-138 is a topological domain, periplasmic. The chain crosses the membrane as a helical span at residues 139 to 159; the sequence is WVFVALTLVLTAVLFSLAGLL. At 160-169 the chain is on the cytoplasmic side; sequence NGVFAKTFDD. A helical membrane pass occupies residues 170 to 190; it reads ISLVPTFVLTPLTYLGGVFYS. Over 191–223 the chain is Periplasmic; sequence LTLLPPFWQGLSHLNPIVYMISGFRYGFLGIND. A helical membrane pass occupies residues 224 to 244; it reads VPLVTTFGVLVVFIVAFYLIC. Residues 245-256 lie on the Cytoplasmic side of the membrane; sequence WSLIQRGRGLRS.

Belongs to the ABC-2 integral membrane protein family.

The protein localises to the cell inner membrane. This Escherichia coli O157:H7 protein is Inner membrane transport permease YadH (yadH).